Reading from the N-terminus, the 338-residue chain is Gibberellin 2-beta-dioxygenase 8 (338 aa).

In terms of domain architecture, Fe2OG dioxygenase spans 191–290; it reads NTCYLRMNRY…RFSTAYFMCP (100 aa). Residues His215, Asp217, and His271 each contribute to the Fe cation site. The active site involves Arg281. Arg281 serves as a coordination point for 2-oxoglutarate.

This sequence belongs to the iron/ascorbate-dependent oxidoreductase family. GA2OX subfamily. It depends on Fe(2+) as a cofactor.

The enzyme catalyses gibberellin A1 + 2-oxoglutarate + O2 = gibberellin A8 + succinate + CO2. Its pathway is plant hormone biosynthesis; gibberellin biosynthesis. In terms of biological role, catalyzes the 2-beta-hydroxylation of gibberellins (GA) precursors, rendering them unable to be converted to active GAs. Hydroxylates the C20-GA GA12 and GA53, but is not active on C19-GAs, like GA1, GA4, GA9 and GA20. In Arabidopsis thaliana (Mouse-ear cress), this protein is Gibberellin 2-beta-dioxygenase 8 (GA2OX8).